Here is an 83-residue protein sequence, read N- to C-terminus: Large ribosomal subunit protein bL27 (83 aa).

The disordered stretch occupies residues 1–21 (MAHKRSSGAGRNGRDSNPKYL).

Belongs to the bacterial ribosomal protein bL27 family.

This is Large ribosomal subunit protein bL27 from Kosmotoga olearia (strain ATCC BAA-1733 / DSM 21960 / TBF 19.5.1).